We begin with the raw amino-acid sequence, 245 residues long: Thioredoxin-like 1-2, chloroplastic (245 aa).

The N-terminal 92 residues, 1–92 (MDAISSLGTN…TNHNMLEIQS (92 aa)), are a transit peptide targeting the chloroplast. The Thioredoxin domain maps to 93-194 (ANHLVDSLLN…FKKALDKHGS (102 aa)). Residues C117 and C120 each act as nucleophile in the active site. A disulfide bridge connects residues C117 and C120.

It belongs to the thioredoxin family.

The protein resides in the plastid. It localises to the chloroplast. In terms of biological role, probable thiol-disulfide oxidoreductase that may participate in various redox reactions. In Arabidopsis thaliana (Mouse-ear cress), this protein is Thioredoxin-like 1-2, chloroplastic.